Consider the following 322-residue polypeptide: Sideroflexin-2 (322 aa).

Met-1 is modified (N-acetylmethionine). The next 5 helical transmembrane spans lie at 100 to 122 (MIIT…WQWV), 142 to 164 (SVRQ…AVGM), 174 to 192 (LVGR…CVNI), 228 to 250 (VVIS…MERL), and 265 to 287 (PLQV…GLFP).

It belongs to the sideroflexin family.

Its subcellular location is the mitochondrion inner membrane. The protein localises to the mitochondrion outer membrane. The enzyme catalyses L-serine(in) = L-serine(out). Its function is as follows. Mitochondrial amino-acid transporter that mediates transport of serine into mitochondria. Involved in mitochondrial iron homeostasis by regulating heme biosynthesis. This Bos taurus (Bovine) protein is Sideroflexin-2.